A 165-amino-acid polypeptide reads, in one-letter code: UPF0303 protein ACP_1015 (165 aa).

It belongs to the UPF0303 family.

The sequence is that of UPF0303 protein ACP_1015 from Acidobacterium capsulatum (strain ATCC 51196 / DSM 11244 / BCRC 80197 / JCM 7670 / NBRC 15755 / NCIMB 13165 / 161).